The following is a 792-amino-acid chain: Homeobox protein HAZ1 (792 aa).

The tract at residues methionine 1–aspartate 154 is disordered. Residues asparagine 15–valine 36 show a composition bias toward polar residues. Residues asparagine 38–lysine 49 show a composition bias toward basic residues. Residues serine 51–asparagine 67 show a composition bias toward polar residues. The segment covering valine 95 to proline 104 has biased composition (basic residues). Over residues threonine 116–leucine 127 the composition is skewed to basic and acidic residues. The PHD-type zinc-finger motif lies at aspartate 244 to lysine 301. Disordered stretches follow at residues glutamine 338 to leucine 495 and tyrosine 529 to glutamine 599. Residues proline 345–tyrosine 354 are compositionally biased toward acidic residues. Over residues histidine 362–glycine 371 the composition is skewed to basic and acidic residues. Acidic residues-rich tracts occupy residues aspartate 373–glutamate 389 and aspartate 433–cysteine 453. Residues serine 610–alanine 669 constitute a DNA-binding region (homeobox). Disordered regions lie at residues glutamate 677–glycine 697 and serine 711–arginine 792. Composition is skewed to polar residues over residues glycine 716–alanine 737 and asparagine 746–alanine 760. Basic and acidic residues predominate over residues aspartate 774–arginine 792.

This sequence belongs to the PHD-associated homeobox family. As to expression, expressed in roots, leaves, stems, panicle and seeds.

The protein localises to the nucleus. Transcriptional repressor involved in the regulation of gibberrelin (GA) signaling. Binds to the 5'-GATC-3' motif of HD16/EL1 promoter. Functions as a positive regulator of GA signaling by suppressing the expression of HD16/EL1, a negative regulator of GA signaling. The protein is Homeobox protein HAZ1 of Oryza sativa subsp. japonica (Rice).